Here is a 323-residue protein sequence, read N- to C-terminus: 4-hydroxy-3-methylbut-2-enyl diphosphate reductase (323 aa).

C21 contacts [4Fe-4S] cluster. 2 residues coordinate (2E)-4-hydroxy-3-methylbut-2-enyl diphosphate: H50 and H83. Dimethylallyl diphosphate is bound by residues H50 and H83. 2 residues coordinate isopentenyl diphosphate: H50 and H83. [4Fe-4S] cluster is bound at residue C105. H133 is a (2E)-4-hydroxy-3-methylbut-2-enyl diphosphate binding site. A dimethylallyl diphosphate-binding site is contributed by H133. H133 contributes to the isopentenyl diphosphate binding site. The active-site Proton donor is the E135. T173 is a binding site for (2E)-4-hydroxy-3-methylbut-2-enyl diphosphate. C203 contacts [4Fe-4S] cluster. Residues S231, S232, N233, and S276 each contribute to the (2E)-4-hydroxy-3-methylbut-2-enyl diphosphate site. Positions 231, 232, 233, and 276 each coordinate dimethylallyl diphosphate. The isopentenyl diphosphate site is built by S231, S232, N233, and S276.

This sequence belongs to the IspH family. [4Fe-4S] cluster is required as a cofactor.

The enzyme catalyses isopentenyl diphosphate + 2 oxidized [2Fe-2S]-[ferredoxin] + H2O = (2E)-4-hydroxy-3-methylbut-2-enyl diphosphate + 2 reduced [2Fe-2S]-[ferredoxin] + 2 H(+). It carries out the reaction dimethylallyl diphosphate + 2 oxidized [2Fe-2S]-[ferredoxin] + H2O = (2E)-4-hydroxy-3-methylbut-2-enyl diphosphate + 2 reduced [2Fe-2S]-[ferredoxin] + 2 H(+). It participates in isoprenoid biosynthesis; dimethylallyl diphosphate biosynthesis; dimethylallyl diphosphate from (2E)-4-hydroxy-3-methylbutenyl diphosphate: step 1/1. It functions in the pathway isoprenoid biosynthesis; isopentenyl diphosphate biosynthesis via DXP pathway; isopentenyl diphosphate from 1-deoxy-D-xylulose 5-phosphate: step 6/6. Catalyzes the conversion of 1-hydroxy-2-methyl-2-(E)-butenyl 4-diphosphate (HMBPP) into a mixture of isopentenyl diphosphate (IPP) and dimethylallyl diphosphate (DMAPP). Acts in the terminal step of the DOXP/MEP pathway for isoprenoid precursor biosynthesis. The protein is 4-hydroxy-3-methylbut-2-enyl diphosphate reductase of Cutibacterium acnes (strain DSM 16379 / KPA171202) (Propionibacterium acnes).